A 120-amino-acid polypeptide reads, in one-letter code: MEWKVVDTVISPSTGVSFSCIHSLKNLRLTLWYQADVYMPPGSIIIPFNKGVLINDKLYPVTVYNVTRFNPVLWKSLKENSHCPGNCNPKPEACSYPFECLVSVCPFGLTRNIQIDNKKV.

Belongs to the IraM/RssC family.

It localises to the cytoplasm. Functionally, involved in the stabilization of the sigma stress factor RpoS. This is Anti-adapter protein IraM from Salmonella choleraesuis (strain SC-B67).